Reading from the N-terminus, the 417-residue chain is Transcobalamin-1 (417 aa).

An N-terminal signal peptide occupies residues 1–25; it reads MRQSHQLPLVGLLLFSLIPSQLCQS. A globular N-terminal alpha domain region spans residues 24 to 308; it reads QSCVVSEKDY…DVTKLLLVPK (285 aa). Residue Asn90 is glycosylated (N-linked (GlcNAc...) asparagine). 143 to 147 lines the cyanocob(III)alamin pocket; it reads TNYYQ. A disulfide bridge connects residues Cys156 and Cys198. Residues Asn161, Asn166, and Asn179 are each glycosylated (N-linked (GlcNAc...) asparagine). Cyanocob(III)alamin contacts are provided by Asp187 and Gln287. Positions 309–327 are flexible linker; it reads VQVNITDEPVPVVPTLSPE. Residues Asn312, Asn328, Asn345, and Asn360 are each glycosylated (N-linked (GlcNAc...) asparagine). The tract at residues 328–417 is globular C-terminal beta domain; sequence NISVIYCVKI…GIMLSKMESI (90 aa). Cyanocob(III)alamin-binding positions include 376–377 and 393–395; these read YI and WEH.

The protein belongs to the eukaryotic cobalamin transport proteins family. Post-translationally, contains about 30% carbohydrates. As to expression, haptocorrins are a family of cobalamin-binding glycoproteins found in blood, salivary and mucosal secretions.

The protein resides in the secreted. Functionally, binds vitamin B12 with femtomolar affinity and protects it from the acidic environment of the stomach. Binds to cobalamin and to cobalamin analogs such as cobinamide. In Sus scrofa (Pig), this protein is Transcobalamin-1 (TCN1).